The primary structure comprises 412 residues: Translation initiation factor 2 subunit gamma (412 aa).

Residues 7–203 enclose the tr-type G domain; it reads QPEVNIGLVG…AIESEIPTPD (197 aa). Positions 16-23 are G1; that stretch reads GHVDHGKT. Mg(2+)-binding residues include Asp19, Thr23, Gly44, and Ser46. Residue 19–24 participates in GTP binding; that stretch reads DHGKTT. Residues 44-48 are G2; that stretch reads GISIR. The interval 90 to 93 is G3; that stretch reads DAPG. Residues 146 to 149 and 181 to 183 contribute to the GTP site; these read NKVD and SAQ. The G4 stretch occupies residues 146 to 149; the sequence is NKVD. The tract at residues 181–183 is G5; the sequence is SAQ.

The protein belongs to the TRAFAC class translation factor GTPase superfamily. Classic translation factor GTPase family. EIF2G subfamily. In terms of assembly, heterotrimer composed of an alpha, a beta and a gamma chain. Mg(2+) serves as cofactor.

It catalyses the reaction GTP + H2O = GDP + phosphate + H(+). Its function is as follows. eIF-2 functions in the early steps of protein synthesis by forming a ternary complex with GTP and initiator tRNA. In Halorubrum lacusprofundi (strain ATCC 49239 / DSM 5036 / JCM 8891 / ACAM 34), this protein is Translation initiation factor 2 subunit gamma.